Here is a 317-residue protein sequence, read N- to C-terminus: Transaldolase (317 aa).

Lysine 132 acts as the Schiff-base intermediate with substrate in catalysis.

It belongs to the transaldolase family. Type 1 subfamily.

The protein localises to the cytoplasm. It catalyses the reaction D-sedoheptulose 7-phosphate + D-glyceraldehyde 3-phosphate = D-erythrose 4-phosphate + beta-D-fructose 6-phosphate. Its pathway is carbohydrate degradation; pentose phosphate pathway; D-glyceraldehyde 3-phosphate and beta-D-fructose 6-phosphate from D-ribose 5-phosphate and D-xylulose 5-phosphate (non-oxidative stage): step 2/3. Functionally, transaldolase is important for the balance of metabolites in the pentose-phosphate pathway. In Haemophilus influenzae (strain ATCC 51907 / DSM 11121 / KW20 / Rd), this protein is Transaldolase.